Reading from the N-terminus, the 470-residue chain is Origin of replication complex subunit 4 (470 aa).

63-70 (GPRGCGKA) is an ATP binding site.

This sequence belongs to the ORC4 family. Component of the origin recognition complex (ORC) composed of at least ORC1, ORC2, ORC3, ORC4, ORC5 and ORC6. ORC is regulated in a cell-cycle and development dependent manner. It is sequentially assembled at the exit from anaphase of mitosis and disassembled as cells enter S phase. In terms of tissue distribution, expressed in the shoot apical meristem (SAM), leaves, ears and roots (including root tips).

It localises to the nucleus. Its function is as follows. Component of the origin recognition complex (ORC) that binds origins of replication. DNA-binding is ATP-dependent. The specific DNA sequences that define origins of replication have not been identified yet. ORC is required to assemble the pre-replication complex necessary to initiate DNA replication. The chain is Origin of replication complex subunit 4 from Oryza sativa subsp. japonica (Rice).